The chain runs to 392 residues: Phosphoglycerate kinase (392 aa).

Substrate is bound by residues D21–N23, R36, H59–R62, R118, and R151. ATP is bound by residues K202, E321, and G347 to S350.

Belongs to the phosphoglycerate kinase family. As to quaternary structure, monomer.

The protein localises to the cytoplasm. It carries out the reaction (2R)-3-phosphoglycerate + ATP = (2R)-3-phospho-glyceroyl phosphate + ADP. It functions in the pathway carbohydrate degradation; glycolysis; pyruvate from D-glyceraldehyde 3-phosphate: step 2/5. The polypeptide is Phosphoglycerate kinase (Symbiobacterium thermophilum (strain DSM 24528 / JCM 14929 / IAM 14863 / T)).